The primary structure comprises 1012 residues: Retinoblastoma-related protein (1012 aa).

Residues 403–604 are domain A; it reads TPVSTAMTTA…EKGSSMDNSL (202 aa). Residues 403–863 form a pocket region; the sequence is TPVSTAMTTA…NEVFIPSVKP (461 aa). A spacer region spans residues 605-723; it reads IIARPALSAG…PGGGGETCAE (119 aa). The tract at residues 724 to 863 is domain B; that stretch reads TGINIFFSKI…NEVFIPSVKP (140 aa). The segment at 884 to 905 is disordered; it reads NNDKDGQCPGSPKLSTFPSLPD.

This sequence belongs to the retinoblastoma protein (RB) family.

The protein localises to the nucleus. In terms of biological role, regulator of biological processes that recruits a histone deacetylase to control gene transcription. May play a role in the entry into mitosis, negatively regulating the cell proliferation. Formation of stable complexes with geminiviridae replication-associated proteins may create a cellular environment which favors viral DNA replication. This chain is Retinoblastoma-related protein (RB), found in Oxybasis rubra (Red goosefoot).